Reading from the N-terminus, the 85-residue chain is Sodium channel neurotoxin MeuNaTxalpha-1 (85 aa).

Residues 1–19 (MNSLVMISLALLVMTGVES) form the signal peptide. The LCN-type CS-alpha/beta domain occupies 21–83 (RDGYIADDKN…VPIKVSGKCN (63 aa)). The tract at residues 27 to 31 (DDKNC) is specificity module, loop 1. 4 cysteine pairs are disulfide-bonded: Cys31–Cys82, Cys35–Cys55, Cys41–Cys65, and Cys45–Cys67. Specificity module, loop stretches follow at residues 58–62 (AGQYG) and 75–83 (PIKVSGKCN). An Asparagine amide modification is found at Asn83.

It belongs to the long (4 C-C) scorpion toxin superfamily. Sodium channel inhibitor family. Alpha subfamily. C-terminal amidation does not appear to play an important role in activity, since the non-amidated recombinant toxin and the native toxin (which is amidated) show similar activities on all sodium channels tested. Expressed by the venom gland.

It is found in the secreted. In terms of biological role, alpha toxins bind voltage-independently at site-3 of sodium channels (Nav) and inhibit the inactivation of the activated channels, thereby blocking neuronal transmission. This toxin inhibits inactivation of Nav1.6/SCN8A (EC(50)=3.1 uM) and drosophila DmNav1 (EC(50)=1.17 uM). It also shows a weak inhibition of inactivation on Nav1.2/SCN2A Nav1.3/SCN3A, and Nav1.7/SCN9A. The toxin (1 uM) does not significantly shift the midpoint of activation at the two channels, but induces a significant depolarizing shift in the V(1/2) of inactivation of the channels. The toxin has also been shown to dose-dependently stimulates intracellular signaling in DRG neurons through activation of two kinases (type II protein kinase A (PKA-II) and MAP kinases 1/3 (MAPK1/MAPK3)). Nav1.2/SCN2A is strongly suggested to be the target channel predominantly involved in this activation. In vivo, the toxin induces a dose-dependent thermal hyperalgesia lasting 30-45 minutes. The chain is Sodium channel neurotoxin MeuNaTxalpha-1 from Mesobuthus eupeus (Lesser Asian scorpion).